The primary structure comprises 357 residues: UPF0283 membrane protein BSUIS_A1077 (357 aa).

The segment at 1–36 (MSDKTPRKPTAFRLEQPARVSAASEQEEPRHPRAVK) is disordered. Over residues 27–36 (EEPRHPRAVK) the composition is skewed to basic and acidic residues. The next 2 helical transmembrane spans lie at 78–98 (ILFG…TEDL) and 109–129 (LGWT…AIIL).

This sequence belongs to the UPF0283 family.

Its subcellular location is the cell inner membrane. In Brucella suis (strain ATCC 23445 / NCTC 10510), this protein is UPF0283 membrane protein BSUIS_A1077.